Reading from the N-terminus, the 392-residue chain is GTPase Obg (392 aa).

The Obg domain occupies 1–159 (MKFIDEALIR…RDLQLELMLL (159 aa)). In terms of domain architecture, OBG-type G spans 160 to 333 (ADVGMLGLPN…LCRDIMDFIE (174 aa)). GTP-binding positions include 166 to 173 (GLPNAGKS), 191 to 195 (FTTLV), 213 to 216 (DIPG), 283 to 286 (NKID), and 314 to 316 (SAA). Mg(2+)-binding residues include Ser173 and Thr193. Residues 361 to 392 (SEQVFTEDDQEEDDWDDWSEDDEEGVEIIYKP) are disordered. Positions 365–386 (FTEDDQEEDDWDDWSEDDEEGV) are enriched in acidic residues.

It belongs to the TRAFAC class OBG-HflX-like GTPase superfamily. OBG GTPase family. Monomer. Mg(2+) serves as cofactor.

Its subcellular location is the cytoplasm. Functionally, an essential GTPase which binds GTP, GDP and possibly (p)ppGpp with moderate affinity, with high nucleotide exchange rates and a fairly low GTP hydrolysis rate. Plays a role in control of the cell cycle, stress response, ribosome biogenesis and in those bacteria that undergo differentiation, in morphogenesis control. This is GTPase Obg from Histophilus somni (strain 2336) (Haemophilus somnus).